Consider the following 416-residue polypeptide: Gamma-glutamyl phosphate reductase (416 aa).

Belongs to the gamma-glutamyl phosphate reductase family.

The protein resides in the cytoplasm. The enzyme catalyses L-glutamate 5-semialdehyde + phosphate + NADP(+) = L-glutamyl 5-phosphate + NADPH + H(+). The protein operates within amino-acid biosynthesis; L-proline biosynthesis; L-glutamate 5-semialdehyde from L-glutamate: step 2/2. Catalyzes the NADPH-dependent reduction of L-glutamate 5-phosphate into L-glutamate 5-semialdehyde and phosphate. The product spontaneously undergoes cyclization to form 1-pyrroline-5-carboxylate. This is Gamma-glutamyl phosphate reductase from Salmonella newport (strain SL254).